The chain runs to 506 residues: Conglutin alpha 1 (506 aa).

A signal peptide spans 1-19 (MANKLLALSLFLLFSGCFA). 2 cysteine pairs are disulfide-bonded: C31–C64 and C107–C328. In terms of domain architecture, Cupin type-1 1 spans 36–235 (LNALEPDNSV…AFSVDREIVR (200 aa)). 3 disordered regions span residues 111–131 (YEEP…RHQK), 195–216 (QQKE…NVLS), and 251–322 (VKEG…DRNG). Residues 195–207 (QQKEGGQGQQQEG) are compositionally biased toward low complexity. The span at 270-280 (EEEEEEEEEEE) shows a compositional bias: acidic residues. Residues 306–315 (QVRRVRRPHH) are compositionally biased toward basic residues. A Cupin type-1 2 domain is found at 334–483 (HNIGQSTSPD…AFNLDRDQAR (150 aa)). N-linked (GlcNAc...) asparagine glycans are attached at residues N397 and N439.

Belongs to the 11S seed storage protein (globulins) family. As to quaternary structure, hexamer; each subunit is composed of an acidic and a basic chain derived from a single precursor and linked by a disulfide bond. Component of globulins complexes which accumulate in seeds. Expressed in developing cotyledons and in the embryonic axis of germinating seeds.

In terms of biological role, sulfur-rich seed storage protein. This protein found in the seeds of many leguminous and non-leguminous plants is the source of sulfur-containing amino acids in seed meals. This chain is Conglutin alpha 1, found in Lupinus angustifolius (Narrow-leaved blue lupine).